The primary structure comprises 184 residues: Transposon Tn917 resolvase (184 aa).

The 134-residue stretch at Met-1–Gly-134 folds into the Resolvase/invertase-type recombinase catalytic domain. Ser-9 acts as the O-(5'-phospho-DNA)-serine intermediate in catalysis. The H-T-H motif DNA-binding region spans Ile-161–Asn-180.

Belongs to the site-specific recombinase resolvase family.

Resolvase catalyzes the resolution (a site-specific recombination) of the cointegrated replicon to yield the final transposition products. In Enterococcus faecalis (Streptococcus faecalis), this protein is Transposon Tn917 resolvase (tnpR).